The chain runs to 491 residues: Ketol-acid reductoisomerase (NADP(+)) (491 aa).

A KARI N-terminal Rossmann domain is found at 15 to 208 (AQLGKCRFMG…GGHRAGVLES (194 aa)). Residues 45 to 48 (CGAQ), arginine 68, arginine 76, serine 78, and 108 to 110 (DKQ) contribute to the NADP(+) site. Histidine 132 is an active-site residue. Residue glycine 158 participates in NADP(+) binding. 2 consecutive KARI C-terminal knotted domains span residues 209–344 (SFVA…TAPQ) and 345–484 (YEGK…MTDM). Residues aspartate 217, glutamate 221, glutamate 389, and glutamate 393 each coordinate Mg(2+). Serine 414 is a substrate binding site.

It belongs to the ketol-acid reductoisomerase family. Requires Mg(2+) as cofactor.

The catalysed reaction is (2R)-2,3-dihydroxy-3-methylbutanoate + NADP(+) = (2S)-2-acetolactate + NADPH + H(+). It carries out the reaction (2R,3R)-2,3-dihydroxy-3-methylpentanoate + NADP(+) = (S)-2-ethyl-2-hydroxy-3-oxobutanoate + NADPH + H(+). The protein operates within amino-acid biosynthesis; L-isoleucine biosynthesis; L-isoleucine from 2-oxobutanoate: step 2/4. It participates in amino-acid biosynthesis; L-valine biosynthesis; L-valine from pyruvate: step 2/4. Functionally, involved in the biosynthesis of branched-chain amino acids (BCAA). Catalyzes an alkyl-migration followed by a ketol-acid reduction of (S)-2-acetolactate (S2AL) to yield (R)-2,3-dihydroxy-isovalerate. In the isomerase reaction, S2AL is rearranged via a Mg-dependent methyl migration to produce 3-hydroxy-3-methyl-2-ketobutyrate (HMKB). In the reductase reaction, this 2-ketoacid undergoes a metal-dependent reduction by NADPH to yield (R)-2,3-dihydroxy-isovalerate. In Shigella dysenteriae serotype 1 (strain Sd197), this protein is Ketol-acid reductoisomerase (NADP(+)).